Here is a 224-residue protein sequence, read N- to C-terminus: MPDFVIVLINLAFCLGAYLFGSINFSIIYSKFKKNDVRKLGSGNAGSTNVLRNFGVKIALVIFALDILKTYLASLLVYFVNLYAFKDSVVVFHAVAYCVVIGHIFPIWHKFKGGKGAASTLGYIISVNIIIAVIGAIVYLLIIIYWKRIVSFTTLITIPSLLPLMFIPWMSQLPLGFIAYQWPWWISPLVYVLIILLVIWSHHENISRMIKGQEKVIKWNKTSK.

The next 6 membrane-spanning stretches (helical) occupy residues 4–24 (FVIV…GSIN), 60–80 (LVIF…VYFV), 88–108 (SVVV…FPIW), 124–144 (IISV…LIII), 149–169 (IVSF…FIPW), and 182–202 (WPWW…IWSH).

Belongs to the PlsY family. Probably interacts with PlsX.

It is found in the cell membrane. It carries out the reaction an acyl phosphate + sn-glycerol 3-phosphate = a 1-acyl-sn-glycero-3-phosphate + phosphate. The protein operates within lipid metabolism; phospholipid metabolism. Catalyzes the transfer of an acyl group from acyl-phosphate (acyl-PO(4)) to glycerol-3-phosphate (G3P) to form lysophosphatidic acid (LPA). This enzyme utilizes acyl-phosphate as fatty acyl donor, but not acyl-CoA or acyl-ACP. This chain is Glycerol-3-phosphate acyltransferase, found in Mycoplasmopsis pulmonis (strain UAB CTIP) (Mycoplasma pulmonis).